The sequence spans 182 residues: Large ribosomal subunit protein uL16 (182 aa).

Belongs to the universal ribosomal protein uL16 family.

The protein is Large ribosomal subunit protein uL16 of Pyrobaculum arsenaticum (strain DSM 13514 / JCM 11321 / PZ6).